The following is a 535-amino-acid chain: CTP synthase (535 aa).

Positions 1 to 267 (MTKYIFVTGG…DQIVCDHLKL (267 aa)) are amidoligase domain. Ser13 contacts CTP. Ser13 provides a ligand contact to UTP. 14-19 (SLGKGI) serves as a coordination point for ATP. Tyr54 provides a ligand contact to L-glutamine. Position 71 (Asp71) interacts with ATP. Mg(2+)-binding residues include Asp71 and Glu141. Residues 148–150 (DIE), 188–193 (KTKPTQ), and Lys224 each bind CTP. UTP is bound by residues 188–193 (KTKPTQ) and Lys224. 240-242 (RDA) serves as a coordination point for ATP. The region spanning 292 to 534 (KIALVGKYVE…VRASITNKES (243 aa)) is the Glutamine amidotransferase type-1 domain. L-glutamine is bound at residue Gly354. Catalysis depends on Cys381, which acts as the Nucleophile; for glutamine hydrolysis. Residues 382–385 (LGMQ), Glu405, and Arg462 contribute to the L-glutamine site. Catalysis depends on residues His507 and Glu509.

This sequence belongs to the CTP synthase family. In terms of assembly, homotetramer.

It carries out the reaction UTP + L-glutamine + ATP + H2O = CTP + L-glutamate + ADP + phosphate + 2 H(+). The catalysed reaction is L-glutamine + H2O = L-glutamate + NH4(+). The enzyme catalyses UTP + NH4(+) + ATP = CTP + ADP + phosphate + 2 H(+). It participates in pyrimidine metabolism; CTP biosynthesis via de novo pathway; CTP from UDP: step 2/2. With respect to regulation, allosterically activated by GTP, when glutamine is the substrate; GTP has no effect on the reaction when ammonia is the substrate. The allosteric effector GTP functions by stabilizing the protein conformation that binds the tetrahedral intermediate(s) formed during glutamine hydrolysis. Inhibited by the product CTP, via allosteric rather than competitive inhibition. Functionally, catalyzes the ATP-dependent amination of UTP to CTP with either L-glutamine or ammonia as the source of nitrogen. Regulates intracellular CTP levels through interactions with the four ribonucleotide triphosphates. The sequence is that of CTP synthase from Bacillus cereus (strain G9842).